A 193-amino-acid chain; its full sequence is nitroreductase FRM2 (193 aa).

The protein belongs to the nitroreductase family. FMN serves as cofactor.

The protein resides in the cytoplasm. It is found in the nucleus. It catalyses the reaction 4-(hydroxyamino)quinoline N-oxide + 2 NAD(+) + H2O = 4-nitroquinoline N-oxide + 2 NADH + 2 H(+). In terms of biological role, type II nitroreductase, able to reduce 4-nitroquinoline N-oxide (4-NQO) into 4-aminoquinoline-N-oxide (4-AQO) via 4-hydroxyaminoquinoline (4-HAQO), using NADH as reductant. involved in the oxidative stress response. Plays a possible role in the metal stress response. Involved in negative regulation of fatty acid metabolism. This chain is nitroreductase FRM2, found in Saccharomyces cerevisiae (strain ATCC 204508 / S288c) (Baker's yeast).